The following is a 90-amino-acid chain: Putative membrane protein insertion efficiency factor (90 aa).

It belongs to the UPF0161 family.

The protein localises to the cell membrane. Its function is as follows. Could be involved in insertion of integral membrane proteins into the membrane. The sequence is that of Putative membrane protein insertion efficiency factor from Oceanobacillus iheyensis (strain DSM 14371 / CIP 107618 / JCM 11309 / KCTC 3954 / HTE831).